The primary structure comprises 328 residues: Methionyl-tRNA formyltransferase (328 aa).

110-113 contacts (6S)-5,6,7,8-tetrahydrofolate; that stretch reads SNLP.

The protein belongs to the Fmt family.

The catalysed reaction is L-methionyl-tRNA(fMet) + (6R)-10-formyltetrahydrofolate = N-formyl-L-methionyl-tRNA(fMet) + (6S)-5,6,7,8-tetrahydrofolate + H(+). Attaches a formyl group to the free amino group of methionyl-tRNA(fMet). The formyl group appears to play a dual role in the initiator identity of N-formylmethionyl-tRNA by promoting its recognition by IF2 and preventing the misappropriation of this tRNA by the elongation apparatus. This is Methionyl-tRNA formyltransferase from Bifidobacterium longum (strain DJO10A).